The following is a 537-amino-acid chain: CTP synthase (537 aa).

Residues M1–L268 are amidoligase domain. Residue S14 participates in CTP binding. UTP is bound at residue S14. S15–L20 serves as a coordination point for ATP. L-glutamine is bound at residue Y55. ATP is bound at residue D72. Mg(2+) is bound by residues D72 and E142. CTP is bound by residues D149–E151, K188–Q193, and K224. UTP is bound by residues K188 to Q193 and K224. The Glutamine amidotransferase type-1 domain occupies R294 to N533. Position 353 (G353) interacts with L-glutamine. C380 acts as the Nucleophile; for glutamine hydrolysis in catalysis. Residues L381–Q384, E404, and R461 each bind L-glutamine. Active-site residues include H506 and E508.

The protein belongs to the CTP synthase family. As to quaternary structure, homotetramer.

It carries out the reaction UTP + L-glutamine + ATP + H2O = CTP + L-glutamate + ADP + phosphate + 2 H(+). The enzyme catalyses L-glutamine + H2O = L-glutamate + NH4(+). The catalysed reaction is UTP + NH4(+) + ATP = CTP + ADP + phosphate + 2 H(+). Its pathway is pyrimidine metabolism; CTP biosynthesis via de novo pathway; CTP from UDP: step 2/2. Allosterically activated by GTP, when glutamine is the substrate; GTP has no effect on the reaction when ammonia is the substrate. The allosteric effector GTP functions by stabilizing the protein conformation that binds the tetrahedral intermediate(s) formed during glutamine hydrolysis. Inhibited by the product CTP, via allosteric rather than competitive inhibition. In terms of biological role, catalyzes the ATP-dependent amination of UTP to CTP with either L-glutamine or ammonia as the source of nitrogen. Regulates intracellular CTP levels through interactions with the four ribonucleotide triphosphates. The chain is CTP synthase from Chlamydia abortus (strain DSM 27085 / S26/3) (Chlamydophila abortus).